A 509-amino-acid polypeptide reads, in one-letter code: Major envelope glycoprotein (509 aa).

An N-terminal signal peptide occupies residues 1 to 17; the sequence is MVRTAVLILLLVRFSEP. Asn-34, Asn-156, Asn-194, Asn-351, Asn-381, and Asn-423 each carry an N-linked (GlcNAc...) asparagine; by host glycan. Ser-479 carries O-palmitoyl serine; by host lipidation. Residues 480-502 form a helical membrane-spanning segment; sequence FMLGHAFSFMLTVGVIIFLFCMV. Asn-504 is a glycosylation site (N-linked (GlcNAc...) asparagine; by host).

This sequence belongs to the baculoviridae gp64 family. In terms of processing, palmitoylated.

Its subcellular location is the virion membrane. It localises to the host cell membrane. In terms of biological role, envelope phosphoglycoprotein which mediates the fusion of viral and host endosomal membranes leading to virus entry into the host cell. This chain is Major envelope glycoprotein (GP67), found in Choristoneura fumiferana nuclear polyhedrosis virus (CfMNPV).